Reading from the N-terminus, the 92-residue chain is Phosphoribosyl-ATP pyrophosphatase (92 aa).

It belongs to the PRA-PH family.

It localises to the cytoplasm. It carries out the reaction 1-(5-phospho-beta-D-ribosyl)-ATP + H2O = 1-(5-phospho-beta-D-ribosyl)-5'-AMP + diphosphate + H(+). Its pathway is amino-acid biosynthesis; L-histidine biosynthesis; L-histidine from 5-phospho-alpha-D-ribose 1-diphosphate: step 2/9. In Leptospira borgpetersenii serovar Hardjo-bovis (strain JB197), this protein is Phosphoribosyl-ATP pyrophosphatase.